A 355-amino-acid polypeptide reads, in one-letter code: Nicotinate-nucleotide--dimethylbenzimidazole phosphoribosyltransferase (355 aa).

The active-site Proton acceptor is Glu-321.

The protein belongs to the CobT family.

It catalyses the reaction 5,6-dimethylbenzimidazole + nicotinate beta-D-ribonucleotide = alpha-ribazole 5'-phosphate + nicotinate + H(+). Its pathway is nucleoside biosynthesis; alpha-ribazole biosynthesis; alpha-ribazole from 5,6-dimethylbenzimidazole: step 1/2. Functionally, catalyzes the synthesis of alpha-ribazole-5'-phosphate from nicotinate mononucleotide (NAMN) and 5,6-dimethylbenzimidazole (DMB). This chain is Nicotinate-nucleotide--dimethylbenzimidazole phosphoribosyltransferase, found in Desulfotalea psychrophila (strain LSv54 / DSM 12343).